Reading from the N-terminus, the 538-residue chain is Putative cysteine ligase BshC (538 aa).

A coiled-coil region spans residues 460 to 484; sequence KINEQIELLERMLKRNVEKKHEVEL.

It belongs to the BshC family.

Its function is as follows. Involved in bacillithiol (BSH) biosynthesis. May catalyze the last step of the pathway, the addition of cysteine to glucosamine malate (GlcN-Mal) to generate BSH. In Bacillus cereus (strain AH187), this protein is Putative cysteine ligase BshC.